The chain runs to 478 residues: Zinc finger and SCAN domain-containing protein 26 (478 aa).

Residue Lys17 forms a Glycyl lysine isopeptide (Lys-Gly) (interchain with G-Cter in SUMO2) linkage. One can recognise an SCAN box domain in the interval 51–133 (CKQFRQLRYE…VVLEDLQLDL (83 aa)). Disordered regions lie at residues 159-181 (GVQE…KGEE) and 200-226 (ESSG…AKPK). Composition is skewed to basic and acidic residues over residues 164–181 (QVRH…KGEE) and 207–226 (EPME…AKPK). A C2H2-type 1; degenerate zinc finger spans residues 231-253 (YKCSEREQRFIQHLDLIEHASTH). 7 C2H2-type zinc fingers span residues 282 to 304 (HQCH…QKIH), 310 to 332 (YQCN…LRIH), 338 to 360 (YLCI…QRIH), 366 to 388 (CECK…QRIH), 394 to 416 (HQCN…HRIH), 422 to 444 (FKCN…VRIH), and 450 to 472 (YQCS…QRYH).

Its subcellular location is the nucleus. May be involved in transcriptional regulation. This Homo sapiens (Human) protein is Zinc finger and SCAN domain-containing protein 26 (ZSCAN26).